Here is a 530-residue protein sequence, read N- to C-terminus: Phosphoenolpyruvate carboxykinase (ATP) (530 aa).

Substrate contacts are provided by Arg-58, Tyr-195, and Lys-201. ATP contacts are provided by residues Lys-201, His-220, and 236–244 (GLSGTGKTT). Mn(2+)-binding residues include Lys-201 and His-220. Asp-257 is a binding site for Mn(2+). Residues Glu-285, Arg-321, 440 to 441 (RI), and Thr-446 each bind ATP. Position 321 (Arg-321) interacts with substrate.

This sequence belongs to the phosphoenolpyruvate carboxykinase (ATP) family. Mn(2+) is required as a cofactor.

It localises to the cytoplasm. The enzyme catalyses oxaloacetate + ATP = phosphoenolpyruvate + ADP + CO2. It participates in carbohydrate biosynthesis; gluconeogenesis. In terms of biological role, involved in the gluconeogenesis. Catalyzes the conversion of oxaloacetate (OAA) to phosphoenolpyruvate (PEP) through direct phosphoryl transfer between the nucleoside triphosphate and OAA. This Staphylococcus aureus (strain Mu3 / ATCC 700698) protein is Phosphoenolpyruvate carboxykinase (ATP).